We begin with the raw amino-acid sequence, 351 residues long: Alanine racemase (351 aa).

K34 acts as the Proton acceptor; specific for D-alanine in catalysis. Position 34 is an N6-(pyridoxal phosphate)lysine (K34). R126 contributes to the substrate binding site. Y248 serves as the catalytic Proton acceptor; specific for L-alanine. M296 provides a ligand contact to substrate.

This sequence belongs to the alanine racemase family. The cofactor is pyridoxal 5'-phosphate.

The enzyme catalyses L-alanine = D-alanine. It functions in the pathway amino-acid biosynthesis; D-alanine biosynthesis; D-alanine from L-alanine: step 1/1. Its function is as follows. Catalyzes the interconversion of L-alanine and D-alanine. May also act on other amino acids. The polypeptide is Alanine racemase (alr) (Deinococcus radiodurans (strain ATCC 13939 / DSM 20539 / JCM 16871 / CCUG 27074 / LMG 4051 / NBRC 15346 / NCIMB 9279 / VKM B-1422 / R1)).